Reading from the N-terminus, the 2206-residue chain is Genome polyprotein (2206 aa).

A lipid anchor (N-myristoyl glycine; by host) is attached at glycine 2. Residues 2–1517 lie on the Cytoplasmic side of the membrane; the sequence is GAQVSSQKVG…NINRAMTILQ (1516 aa). Amphipathic alpha-helix regions lie at residues 579–599 and 579–603; these read GVDDLITEVAQNALALSLPKP and GVDDLITEVAQNALALSLPKPQSNL. Catalysis depends on for protease 2A activity residues histidine 898 and aspartate 916. The Zn(2+) site is built by cysteine 933 and cysteine 935. Cysteine 987 (for protease 2A activity) is an active-site residue. Zn(2+) contacts are provided by cysteine 993 and histidine 995. Residues 1125-1197 form a membrane-binding region; sequence GDSWLKKFTE…HQSCPSQEHQ (73 aa). The tract at residues 1125-1263 is oligomerization; it reads GDSWLKKFTE…SPGTGKSVAT (139 aa). The segment at 1146 to 1150 is RNA-binding; the sequence is SNKIS. The region spanning 1229–1385 is the SF3 helicase domain; it reads EHTINNYIQF…SEYSRDGKLN (157 aa). 1253 to 1260 is an ATP binding site; it reads GSPGTGKS. Cysteine 1393, cysteine 1396, cysteine 1405, and cysteine 1410 together coordinate Zn(2+). The C4-type zinc-finger motif lies at 1393–1410; sequence CKNCHQPANFKRCCPLVC. The interval 1437-1444 is RNA-binding; it reads EKNRRSNI. An oligomerization region spans residues 1448–1453; it reads MEALFQ. An intramembrane segment occupies 1518–1533; the sequence is AVTTFAAVAGVVYVMY. Topologically, residues 1534-2206 are cytoplasmic; the sequence is KLFAGHQGAY…TLYRRWLDSF (673 aa). Tyrosine 1543 is modified (O-(5'-phospho-RNA)-tyrosine). Residues 1563–1741 form the Peptidase C3 domain; sequence GPGFDYAVAM…FAAALKRSYF (179 aa). Residues histidine 1602, glutamate 1633, and cysteine 1709 each act as for protease 3C activity in the active site. The RdRp catalytic domain maps to 1972 to 2087; the sequence is EKLFAFDYTG…SYPHEVDASL (116 aa). Residues aspartate 1978 and aspartate 2073 each coordinate Mg(2+).

It belongs to the picornaviruses polyprotein family. Interacts with capsid protein VP1 and capsid protein VP3 to form heterotrimeric protomers. In terms of assembly, interacts with capsid protein VP0, and capsid protein VP3 to form heterotrimeric protomers. Interacts with human PVR. Five protomers subsequently associate to form pentamers which serve as building blocks for the capsid. Interacts with capsid protein VP2, capsid protein VP3 and capsid protein VP4 following cleavage of capsid protein VP0. As to quaternary structure, interacts with capsid protein VP1 and capsid protein VP3 in the mature capsid. Interacts with capsid protein VP0 and capsid protein VP1 to form heterotrimeric protomers. Five protomers subsequently associate to form pentamers which serve as building blocks for the capsid. Interacts with capsid protein VP4 in the mature capsid. Interacts with protein 2C; this interaction may be important for virion morphogenesis. In terms of assembly, interacts with capsid protein VP1 and capsid protein VP3. As to quaternary structure, homodimer. Homohexamer; forms a hexameric ring structure with 6-fold symmetry characteristic of AAA+ ATPases. Interacts (via N-terminus) with host RTN3 (via reticulon domain); this interaction is important for viral replication. Interacts with capsid protein VP3; this interaction may be important for virion morphogenesis. In terms of assembly, interacts with protein 3CD. As to quaternary structure, homodimer. Interacts with host GBF1. Interacts (via GOLD domain) with host ACBD3 (via GOLD domain); this interaction allows the formation of a viral protein 3A/ACBD3 heterotetramer with a 2:2 stoichiometry, which will stimulate the recruitment of host PI4KB in order to synthesize PI4P at the viral RNA replication sites. Interacts with RNA-directed RNA polymerase. In terms of assembly, interacts with protein 3AB and with RNA-directed RNA polymerase. As to quaternary structure, interacts with Viral protein genome-linked and with protein 3CD. The cofactor is Mg(2+). Post-translationally, specific enzymatic cleavages in vivo by the viral proteases yield processing intermediates and the mature proteins. In terms of processing, myristoylation is required for the formation of pentamers during virus assembly. Further assembly of 12 pentamers and a molecule of genomic RNA generates the provirion. During virion maturation, immature virions are rendered infectious following cleavage of VP0 into VP4 and VP2. This maturation seems to be an autocatalytic event triggered by the presence of RNA in the capsid and it is followed by a conformational change infectious virion. Post-translationally, myristoylation is required during RNA encapsidation and formation of the mature virus particle. In terms of processing, VPg is uridylylated by the polymerase into VPg-pUpU. This acts as a nucleotide-peptide primer for the genomic RNA replication.

The protein resides in the virion. It is found in the host cytoplasm. Its subcellular location is the host cytoplasmic vesicle membrane. The protein localises to the host nucleus. The catalysed reaction is a ribonucleoside 5'-triphosphate + H2O = a ribonucleoside 5'-diphosphate + phosphate + H(+). The enzyme catalyses Selective cleavage of Tyr-|-Gly bond in the picornavirus polyprotein.. It catalyses the reaction RNA(n) + a ribonucleoside 5'-triphosphate = RNA(n+1) + diphosphate. It carries out the reaction Selective cleavage of Gln-|-Gly bond in the poliovirus polyprotein. In other picornavirus reactions Glu may be substituted for Gln, and Ser or Thr for Gly.. Replication or transcription is subject to high level of random mutations by the nucleotide analog ribavirin. Its function is as follows. Forms an icosahedral capsid of pseudo T=3 symmetry with capsid proteins VP2 and VP3. The capsid is 300 Angstroms in diameter, composed of 60 copies of each capsid protein and enclosing the viral positive strand RNA genome. Capsid protein VP1 mainly forms the vertices of the capsid. Capsid protein VP1 interacts with host cell receptor PVR to provide virion attachment to target host cells. This attachment induces virion internalization predominantly through clathrin- and caveolin-independent endocytosis in Hela cells and through caveolin-mediated endocytosis in brain microvascular endothelial cells. Tyrosine kinases are probably involved in the entry process. Virus binding to PVR induces increased junctional permeability and rearrangement of junctional proteins. Modulation of endothelial tight junctions, as well as cytolytic infection of endothelial cells themselves, may result in loss of endothelial integrity which may help the virus to reach the CNS. After binding to its receptor, the capsid undergoes conformational changes. Capsid protein VP1 N-terminus (that contains an amphipathic alpha-helix) and capsid protein VP4 are externalized. Together, they shape a pore in the host membrane through which viral genome is translocated to host cell cytoplasm. In terms of biological role, forms an icosahedral capsid of pseudo T=3 symmetry with capsid proteins VP2 and VP3. The capsid is 300 Angstroms in diameter, composed of 60 copies of each capsid protein and enclosing the viral positive strand RNA genome. Functionally, lies on the inner surface of the capsid shell. After binding to the host receptor, the capsid undergoes conformational changes. Capsid protein VP4 is released, Capsid protein VP1 N-terminus is externalized, and together, they shape a pore in the host membrane through which the viral genome is translocated into the host cell cytoplasm. Component of immature procapsids, which is cleaved into capsid proteins VP4 and VP2 after maturation. Allows the capsid to remain inactive before the maturation step. Its function is as follows. Cysteine protease that cleaves viral polyprotein and specific host proteins. It is responsible for the autocatalytic cleavage between the P1 and P2 regions, which is the first cleavage occurring in the polyprotein. Also cleaves the host translation initiation factor EIF4G1, in order to shut down the capped cellular mRNA translation. Inhibits the host nucleus-cytoplasm protein and RNA trafficking by cleaving host members of the nuclear pores including NUP98, NUP62 and NUP153. Counteracts stress granule formation probably by antagonizing its assembly or promoting its dissassembly. Cleaves and inhibits host IFIH1/MDA5, thereby inhibiting the type-I IFN production and the establishment of the antiviral state. Cleaves and inhibits host MAVS, thereby inhibiting the type-I IFN production and the establishment of the antiviral state. In terms of biological role, plays an essential role in the virus replication cycle by acting as a viroporin. Creates a pore in the host endoplasmic reticulum and as a consequence releases Ca2+ in the cytoplasm of infected cell. In turn, high levels of cytoplasmic calcium may trigger membrane trafficking and transport of viral ER-associated proteins to viroplasms, sites of viral genome replication. Functionally, induces and associates with structural rearrangements of intracellular membranes. Displays RNA-binding, nucleotide binding and NTPase activities. May play a role in virion morphogenesis and viral RNA encapsidation by interacting with the capsid protein VP3. Localizes the viral replication complex to the surface of membranous vesicles. Together with protein 3CD binds the Cis-Active RNA Element (CRE) which is involved in RNA synthesis initiation. Acts as a cofactor to stimulate the activity of 3D polymerase, maybe through a nucleid acid chaperone activity. Its function is as follows. Localizes the viral replication complex to the surface of membranous vesicles. It inhibits host cell endoplasmic reticulum-to-Golgi apparatus transport and causes the disassembly of the Golgi complex, possibly through GBF1 interaction. This would result in depletion of MHC, trail receptors and IFN receptors at the host cell surface. Plays an essential role in viral RNA replication by recruiting ACBD3 and PI4KB at the viral replication sites, thereby allowing the formation of the rearranged membranous structures where viral replication takes place. In terms of biological role, acts as a primer for viral RNA replication and remains covalently bound to viral genomic RNA. VPg is uridylylated prior to priming replication into VPg-pUpU. The oriI viral genomic sequence may act as a template for this. The VPg-pUpU is then used as primer on the genomic RNA poly(A) by the RNA-dependent RNA polymerase to replicate the viral genome. During genome replication, the VPg-RNA linkage is removed by the host TDP2, thereby accelerating replication. During the late stage of the replication cycle, host TDP2 is excluded from sites of viral RNA synthesis and encapsidation, allowing for the generation of progeny virions. Functionally, involved in the viral replication complex and viral polypeptide maturation. It exhibits protease activity with a specificity and catalytic efficiency that is different from protease 3C. Protein 3CD lacks polymerase activity. Protein 3CD binds to the 5'UTR of the viral genome. Major viral protease that mediates proteolytic processing of the polyprotein. Cleaves host EIF5B, contributing to host translation shutoff. Also cleaves host PABPC1, contributing to host translation shutoff. Cleaves host RIGI and thus contributes to the inhibition of type I interferon production. Cleaves host NLRP1, triggers host N-glycine-mediated degradation of the autoinhibitory NLRP1 N-terminal fragment. Inhibits the integrated stress response (ISR) in the infected cell by cleaving host G3BP1. Stress granule formation is thus inhibited, which allows protein synthesis and viral replication. Its function is as follows. Replicates the viral genomic RNA on the surface of intracellular membranes. May form linear arrays of subunits that propagate along a strong head-to-tail interaction called interface-I. Covalently attaches UMP to a tyrosine of VPg, which is used to prime RNA synthesis. The positive stranded RNA genome is first replicated at virus induced membranous vesicles, creating a dsRNA genomic replication form. This dsRNA is then used as template to synthesize positive stranded RNA genomes. ss(+)RNA genomes are either translated, replicated or encapsidated. In Poliovirus type 3 (strain 23127), this protein is Genome polyprotein.